Consider the following 487-residue polypeptide: Proline--tRNA ligase (487 aa).

The protein belongs to the class-II aminoacyl-tRNA synthetase family. ProS type 3 subfamily. Homodimer.

The protein localises to the cytoplasm. It catalyses the reaction tRNA(Pro) + L-proline + ATP = L-prolyl-tRNA(Pro) + AMP + diphosphate. In terms of biological role, catalyzes the attachment of proline to tRNA(Pro) in a two-step reaction: proline is first activated by ATP to form Pro-AMP and then transferred to the acceptor end of tRNA(Pro). The polypeptide is Proline--tRNA ligase (Pyrobaculum calidifontis (strain DSM 21063 / JCM 11548 / VA1)).